A 344-amino-acid polypeptide reads, in one-letter code: GTPase Obg (344 aa).

The 159-residue stretch at 1–159 folds into the Obg domain; sequence MKFLDEAKVY…MWLILRLKLI (159 aa). Residues 160 to 327 form the OBG-type G domain; it reads ADAGLVGLPN…ALRAIQAQLD (168 aa). GTP-binding positions include 166 to 173, 191 to 195, 212 to 215, 279 to 282, and 308 to 310; these read GLPNAGKS, FTTLH, DIPG, SKAD, and SAA. Mg(2+) contacts are provided by S173 and T193.

Belongs to the TRAFAC class OBG-HflX-like GTPase superfamily. OBG GTPase family. As to quaternary structure, monomer. Mg(2+) is required as a cofactor.

The protein localises to the cytoplasm. Its function is as follows. An essential GTPase which binds GTP, GDP and possibly (p)ppGpp with moderate affinity, with high nucleotide exchange rates and a fairly low GTP hydrolysis rate. Plays a role in control of the cell cycle, stress response, ribosome biogenesis and in those bacteria that undergo differentiation, in morphogenesis control. The polypeptide is GTPase Obg (Methylorubrum populi (strain ATCC BAA-705 / NCIMB 13946 / BJ001) (Methylobacterium populi)).